The chain runs to 535 residues: CTP synthase (535 aa).

The tract at residues 1-267 is amidoligase domain; sequence MTKYIFVTGG…DQIVLDHFGV (267 aa). Residue Ser13 participates in CTP binding. Ser13 is a binding site for UTP. ATP is bound at residue 14 to 19; it reads SLGKGI. Tyr54 contacts L-glutamine. Asp71 provides a ligand contact to ATP. Asp71 and Glu141 together coordinate Mg(2+). CTP is bound by residues 148–150, 188–193, and Lys224; these read DIE and KTKPTQ. Residues 188-193 and Lys224 each bind UTP; that span reads KTKPTQ. In terms of domain architecture, Glutamine amidotransferase type-1 spans 292 to 535; sequence KIALVGKYVA…VAAASREVKD (244 aa). Gly354 contributes to the L-glutamine binding site. Cys381 acts as the Nucleophile; for glutamine hydrolysis in catalysis. L-glutamine contacts are provided by residues 382 to 385, Glu405, and Arg463; that span reads LGMQ. Active-site residues include His508 and Glu510.

This sequence belongs to the CTP synthase family. In terms of assembly, homotetramer.

The catalysed reaction is UTP + L-glutamine + ATP + H2O = CTP + L-glutamate + ADP + phosphate + 2 H(+). The enzyme catalyses L-glutamine + H2O = L-glutamate + NH4(+). It carries out the reaction UTP + NH4(+) + ATP = CTP + ADP + phosphate + 2 H(+). It functions in the pathway pyrimidine metabolism; CTP biosynthesis via de novo pathway; CTP from UDP: step 2/2. Allosterically activated by GTP, when glutamine is the substrate; GTP has no effect on the reaction when ammonia is the substrate. The allosteric effector GTP functions by stabilizing the protein conformation that binds the tetrahedral intermediate(s) formed during glutamine hydrolysis. Inhibited by the product CTP, via allosteric rather than competitive inhibition. Its function is as follows. Catalyzes the ATP-dependent amination of UTP to CTP with either L-glutamine or ammonia as the source of nitrogen. Regulates intracellular CTP levels through interactions with the four ribonucleotide triphosphates. In Levilactobacillus brevis (strain ATCC 367 / BCRC 12310 / CIP 105137 / JCM 1170 / LMG 11437 / NCIMB 947 / NCTC 947) (Lactobacillus brevis), this protein is CTP synthase.